The primary structure comprises 264 residues: MTIQKFLAMKGKEKIVMVTAYDTPTAKIAEEAGVDIILIGDSIGNNVLGYDSTIPVTMEEIIIHLKAVRRGAPNSFIVADMPFLSYGHSIEEAVKNAGILIKNGANAVKIEGGKFHCNLIEKCINIGIPVMGHLGFTPQSINIFGGYKVQGKKEDSKKTILESAIALEQCGVFSIVLEMVTEELAKEITEKISIPTIGIGAGRYCDGQVLVFHDIVGLNPNFKPKFSKQYANTYSIMLNALKEFKKDVKEKNFPKERHTFKGGK.

Mg(2+)-binding residues include Asp41 and Asp80. 3-methyl-2-oxobutanoate is bound by residues 41 to 42 (DS), Asp80, and Lys109. A Mg(2+)-binding site is contributed by Glu111. Glu178 functions as the Proton acceptor in the catalytic mechanism.

Belongs to the PanB family. In terms of assembly, homodecamer; pentamer of dimers. Mg(2+) serves as cofactor.

It localises to the cytoplasm. It catalyses the reaction 3-methyl-2-oxobutanoate + (6R)-5,10-methylene-5,6,7,8-tetrahydrofolate + H2O = 2-dehydropantoate + (6S)-5,6,7,8-tetrahydrofolate. Its pathway is cofactor biosynthesis; (R)-pantothenate biosynthesis; (R)-pantoate from 3-methyl-2-oxobutanoate: step 1/2. Catalyzes the reversible reaction in which hydroxymethyl group from 5,10-methylenetetrahydrofolate is transferred onto alpha-ketoisovalerate to form ketopantoate. The polypeptide is 3-methyl-2-oxobutanoate hydroxymethyltransferase (Thermosipho melanesiensis (strain DSM 12029 / CIP 104789 / BI429)).